The following is a 276-amino-acid chain: Octopine-binding periplasmic protein (276 aa).

Positions 1–20 (MKLKTILCAALLLVAGQAAA) are cleaved as a signal peptide. The cysteines at positions 57 and 64 are disulfide-linked.

The protein belongs to the bacterial solute-binding protein 3 family.

The protein localises to the periplasm. Component of the octopine active transport system probably consisting of four subunits: Q, M, P and T. The polypeptide is Octopine-binding periplasmic protein (occT) (Agrobacterium tumefaciens (strain Ach5)).